Reading from the N-terminus, the 371-residue chain is Queuine tRNA-ribosyltransferase (371 aa).

Aspartate 90 (proton acceptor) is an active-site residue. Residues 90–94 (DSGGF), aspartate 144, glutamine 185, and glycine 212 each bind substrate. The segment at 243–249 (GVGTPED) is RNA binding. Aspartate 262 functions as the Nucleophile in the catalytic mechanism. An RNA binding; important for wobble base 34 recognition region spans residues 267–271 (TRNAR). Cysteine 300, cysteine 302, cysteine 305, and histidine 331 together coordinate Zn(2+).

It belongs to the queuine tRNA-ribosyltransferase family. As to quaternary structure, homodimer. Within each dimer, one monomer is responsible for RNA recognition and catalysis, while the other monomer binds to the replacement base PreQ1. The cofactor is Zn(2+).

It carries out the reaction 7-aminomethyl-7-carbaguanine + guanosine(34) in tRNA = 7-aminomethyl-7-carbaguanosine(34) in tRNA + guanine. Its pathway is tRNA modification; tRNA-queuosine biosynthesis. In terms of biological role, catalyzes the base-exchange of a guanine (G) residue with the queuine precursor 7-aminomethyl-7-deazaguanine (PreQ1) at position 34 (anticodon wobble position) in tRNAs with GU(N) anticodons (tRNA-Asp, -Asn, -His and -Tyr). Catalysis occurs through a double-displacement mechanism. The nucleophile active site attacks the C1' of nucleotide 34 to detach the guanine base from the RNA, forming a covalent enzyme-RNA intermediate. The proton acceptor active site deprotonates the incoming PreQ1, allowing a nucleophilic attack on the C1' of the ribose to form the product. After dissociation, two additional enzymatic reactions on the tRNA convert PreQ1 to queuine (Q), resulting in the hypermodified nucleoside queuosine (7-(((4,5-cis-dihydroxy-2-cyclopenten-1-yl)amino)methyl)-7-deazaguanosine). The polypeptide is Queuine tRNA-ribosyltransferase (Acidithiobacillus ferrooxidans (strain ATCC 23270 / DSM 14882 / CIP 104768 / NCIMB 8455) (Ferrobacillus ferrooxidans (strain ATCC 23270))).